Reading from the N-terminus, the 336-residue chain is Tyrosine recombinase XerC (336 aa).

Residues 14-106 form the Core-binding (CB) domain; sequence VARCRWLEPF…SVKSFYRFLL (93 aa). Residues 127–330 enclose the Tyr recombinase domain; it reads KVPRFVSEEE…TFSRLKEIYD (204 aa). Catalysis depends on residues arginine 183, lysine 207, histidine 282, arginine 285, and histidine 308. Residue tyrosine 317 is the O-(3'-phospho-DNA)-tyrosine intermediate of the active site.

It belongs to the 'phage' integrase family. XerC subfamily. As to quaternary structure, forms a cyclic heterotetrameric complex composed of two molecules of XerC and two molecules of XerD.

It is found in the cytoplasm. Site-specific tyrosine recombinase, which acts by catalyzing the cutting and rejoining of the recombining DNA molecules. The XerC-XerD complex is essential to convert dimers of the bacterial chromosome into monomers to permit their segregation at cell division. It also contributes to the segregational stability of plasmids. In Chlorobaculum parvum (strain DSM 263 / NCIMB 8327) (Chlorobium vibrioforme subsp. thiosulfatophilum), this protein is Tyrosine recombinase XerC.